A 94-amino-acid chain; its full sequence is Large ribosomal subunit protein uL23 (94 aa).

Belongs to the universal ribosomal protein uL23 family. Part of the 50S ribosomal subunit. Contacts protein L29, and trigger factor when it is bound to the ribosome.

Functionally, one of the early assembly proteins it binds 23S rRNA. One of the proteins that surrounds the polypeptide exit tunnel on the outside of the ribosome. Forms the main docking site for trigger factor binding to the ribosome. In Roseiflexus castenholzii (strain DSM 13941 / HLO8), this protein is Large ribosomal subunit protein uL23.